A 324-amino-acid polypeptide reads, in one-letter code: Fructose-1,6-bisphosphatase class 1 (324 aa).

Mg(2+)-binding residues include Glu-88, Asp-107, Leu-109, and Asp-110. Substrate contacts are provided by residues 110 to 113 (DGSS), Asn-199, and Lys-265. Glu-271 provides a ligand contact to Mg(2+).

The protein belongs to the FBPase class 1 family. As to quaternary structure, homotetramer. Mg(2+) is required as a cofactor.

The protein resides in the cytoplasm. It catalyses the reaction beta-D-fructose 1,6-bisphosphate + H2O = beta-D-fructose 6-phosphate + phosphate. Its pathway is carbohydrate biosynthesis; gluconeogenesis. In Neisseria gonorrhoeae (strain ATCC 700825 / FA 1090), this protein is Fructose-1,6-bisphosphatase class 1.